Reading from the N-terminus, the 343-residue chain is Ribosomal RNA small subunit methyltransferase C (343 aa).

Belongs to the methyltransferase superfamily. RsmC family. Monomer.

Its subcellular location is the cytoplasm. The enzyme catalyses guanosine(1207) in 16S rRNA + S-adenosyl-L-methionine = N(2)-methylguanosine(1207) in 16S rRNA + S-adenosyl-L-homocysteine + H(+). Specifically methylates the guanine in position 1207 of 16S rRNA in the 30S particle. This is Ribosomal RNA small subunit methyltransferase C from Escherichia coli O1:K1 / APEC.